Here is a 624-residue protein sequence, read N- to C-terminus: Kelch-like protein diablo (624 aa).

The segment covering 1–21 (MGDPLLPGSTGLGSGPAAAAT) has biased composition (low complexity). A disordered region spans residues 1-55 (MGDPLLPGSTGLGSGPAAAATGGSGTTGTGLGSGGTSGAERPPSPARLTHTSEKH). Residues 22 to 37 (GGSGTTGTGLGSGGTS) show a composition bias toward gly residues. Residues 73–140 (CDVVLNVGGR…CYTAHIIVEE (68 aa)) enclose the BTB domain. Residues 175–277 (CLGIRAFADT…SPKFLVGTVG (103 aa)) form the BACK domain. 6 Kelch repeats span residues 324–370 (VLFA…VLND), 372–418 (LYAV…VLDG), 419–465 (FLYA…VLSG), 467–512 (LYAI…VFNN), 514–559 (IYAV…VVNG), and 560–606 (QLYA…VMRA).

It participates in protein modification; protein ubiquitination. Its function is as follows. Probable substrate-specific adapter of an E3 ubiquitin-protein ligase complex which mediates the ubiquitination and subsequent proteasomal degradation of target proteins. May have a role in synapse differentiation and growth. The chain is Kelch-like protein diablo from Drosophila virilis (Fruit fly).